Reading from the N-terminus, the 246-residue chain is YjeF N-terminal domain-containing 3 (246 aa).

Residues 24–234 (VATVETELLR…DIQKKYELNL (211 aa)) enclose the YjeF N-terminal domain.

As to quaternary structure, interacts with apoa1a. Binds to high-density lipoprotein.

Accelerates cholesterol efflux from endothelial cells to high-density lipoprotein (HDL) and thereby regulates angiogenesis. Orchestrates hematopoietic stem and progenitor cell emergence from the hemogenic endothelium, a type of specialized endothelium manifesting hematopoietic potential. YJEFN3-mediated cholesterol efflux activates endothelial SREBF2, the master transcription factor for cholesterol biosynthesis, which in turn transactivates NOTCH and promotes hematopoietic stem and progenitor cell emergence. The sequence is that of YjeF N-terminal domain-containing 3 from Danio rerio (Zebrafish).